The following is an 829-amino-acid chain: 1,4-alpha-glucan branching enzyme GlgB (829 aa).

The active-site Nucleophile is the D405. The Proton donor role is filled by E458. The segment at 758–829 (ASKATKVSTK…TTAKKTKDNA (72 aa)) is disordered. Composition is skewed to low complexity over residues 778–789 (VKAATKSSVTKV) and 810–820 (VTKTAKASAKT).

This sequence belongs to the glycosyl hydrolase 13 family. GlgB subfamily. As to quaternary structure, monomer.

It catalyses the reaction Transfers a segment of a (1-&gt;4)-alpha-D-glucan chain to a primary hydroxy group in a similar glucan chain.. It participates in glycan biosynthesis; glycogen biosynthesis. Its function is as follows. Catalyzes the formation of the alpha-1,6-glucosidic linkages in glycogen by scission of a 1,4-alpha-linked oligosaccharide from growing alpha-1,4-glucan chains and the subsequent attachment of the oligosaccharide to the alpha-1,6 position. This is 1,4-alpha-glucan branching enzyme GlgB from Actinobacillus succinogenes (strain ATCC 55618 / DSM 22257 / CCUG 43843 / 130Z).